The sequence spans 284 residues: Tryptophan 2,3-dioxygenase (284 aa).

Substrate is bound by residues 53–57 (FIVQH), Y115, and R119. H242 contributes to the heme binding site. T256 lines the substrate pocket.

Belongs to the tryptophan 2,3-dioxygenase family. In terms of assembly, homotetramer. Heme serves as cofactor.

The catalysed reaction is L-tryptophan + O2 = N-formyl-L-kynurenine. Its pathway is amino-acid degradation; L-tryptophan degradation via kynurenine pathway; L-kynurenine from L-tryptophan: step 1/2. Heme-dependent dioxygenase that catalyzes the oxidative cleavage of the L-tryptophan (L-Trp) pyrrole ring and converts L-tryptophan to N-formyl-L-kynurenine. Catalyzes the oxidative cleavage of the indole moiety. This chain is Tryptophan 2,3-dioxygenase, found in Bordetella parapertussis (strain 12822 / ATCC BAA-587 / NCTC 13253).